An 885-amino-acid chain; its full sequence is Envelope glycoprotein B (885 aa).

The first 34 residues, 1 to 34, serve as a signal peptide directing secretion; that stretch reads MRPRGTPPSFLPLPVLLALAVIAAAGRAAPAAAA. Positions 29–46 are enriched in low complexity; sequence APAAAAAPTADPAATPAL. The tract at residues 29–74 is disordered; it reads APAAAAAPTADPAATPALPEDEEVPDEDGEGVATPAPAANASVEAG. Topologically, residues 35–759 are virion surface; it reads APTADPAATP…SGVSSFLSNP (725 aa). The segment covering 47–58 has biased composition (acidic residues); sequence PEDEEVPDEDGE. 2 N-linked (GlcNAc...) asparagine; by host glycosylation sites follow: asparagine 68 and asparagine 122. 5 cysteine pairs are disulfide-bonded: cysteine 97–cysteine 558, cysteine 114–cysteine 514, cysteine 188–cysteine 252, cysteine 345–cysteine 393, and cysteine 581–cysteine 618. Involved in fusion and/or binding to host membrane regions lie at residues 154 to 160 and 239 to 246; these read VWFGHRY and RVEAFHRY. Residues asparagine 379 and asparagine 411 are each glycosylated (N-linked (GlcNAc...) asparagine; by host). The segment at 455–478 is disordered; that stretch reads RRPAGGDPGEAATPGPSVDPPSVE. Asparagine 659 is a glycosylation site (N-linked (GlcNAc...) asparagine; by host). Hydrophobic membrane proximal region stretches follow at residues 704-757 and 716-756; these read IDTV…SFLS and LFAG…SSFL. A helical membrane pass occupies residues 760–780; that stretch reads FGALAVGLLVLAGLAAAFFAF. Residues 781–885 lie on the Intravirion side of the membrane; that stretch reads RYVMRLQRNP…PLRDTDEEEL (105 aa). The Golgi targeting signature appears at 834-837; it reads YMAL. The interval 866–885 is disordered; that stretch reads MRKRARPRYSPLRDTDEEEL. The Internalization motif signature appears at 874 to 877; it reads YSPL.

It belongs to the herpesviridae glycoprotein B family. Homotrimer; disulfide-linked. Binds to heparan sulfate proteoglycans. Interacts with gH/gL heterodimer.

The protein resides in the virion membrane. It localises to the host cell membrane. The protein localises to the host endosome membrane. It is found in the host Golgi apparatus membrane. In terms of biological role, envelope glycoprotein that forms spikes at the surface of virion envelope. Essential for the initial attachment to heparan sulfate moieties of the host cell surface proteoglycans. Involved in fusion of viral and cellular membranes leading to virus entry into the host cell. Following initial binding to its host receptors, membrane fusion is mediated by the fusion machinery composed at least of gB and the heterodimer gH/gL. May be involved in the fusion between the virion envelope and the outer nuclear membrane during virion egress. The sequence is that of Envelope glycoprotein B from Herpes simplex virus type 2 (strain SA8) (Simian agent 8).